Consider the following 240-residue polypeptide: MSYTIYPAIDIRAGKCVRLEQGDYNKETIYGESPYKMAKSFQDAGAKWVHVVDLDGAKAKRPVNDEAILTIAQKLDVPVQVGGGIRTEQDIDRYINGGVARVVLGSVAVYQPDFTKQMLAKYGEQMAIGIDARDGYVATEGWLETSHVKAEDLAAEMARFGAKTFIFTDIARDGMLTGPNIEACVALSKAANANVIASGGVSSIADLAQLRAASLAGAIVGKALYTKRFTLEEALAEGEL.

The active-site Proton acceptor is aspartate 10. Aspartate 131 functions as the Proton donor in the catalytic mechanism.

This sequence belongs to the HisA/HisF family.

The protein resides in the cytoplasm. The catalysed reaction is 1-(5-phospho-beta-D-ribosyl)-5-[(5-phospho-beta-D-ribosylamino)methylideneamino]imidazole-4-carboxamide = 5-[(5-phospho-1-deoxy-D-ribulos-1-ylimino)methylamino]-1-(5-phospho-beta-D-ribosyl)imidazole-4-carboxamide. The protein operates within amino-acid biosynthesis; L-histidine biosynthesis; L-histidine from 5-phospho-alpha-D-ribose 1-diphosphate: step 4/9. The chain is 1-(5-phosphoribosyl)-5-[(5-phosphoribosylamino)methylideneamino] imidazole-4-carboxamide isomerase from Shouchella clausii (strain KSM-K16) (Alkalihalobacillus clausii).